Here is a 356-residue protein sequence, read N- to C-terminus: UDP-N-acetylglucosamine--N-acetylmuramyl-(pentapeptide) pyrophosphoryl-undecaprenol N-acetylglucosamine transferase (356 aa).

UDP-N-acetyl-alpha-D-glucosamine-binding positions include 10–12, N123, R159, S193, I240, and Q284; that span reads TAG.

The protein belongs to the glycosyltransferase 28 family. MurG subfamily.

It is found in the cell membrane. The catalysed reaction is di-trans,octa-cis-undecaprenyl diphospho-N-acetyl-alpha-D-muramoyl-L-alanyl-D-glutamyl-meso-2,6-diaminopimeloyl-D-alanyl-D-alanine + UDP-N-acetyl-alpha-D-glucosamine = di-trans,octa-cis-undecaprenyl diphospho-[N-acetyl-alpha-D-glucosaminyl-(1-&gt;4)]-N-acetyl-alpha-D-muramoyl-L-alanyl-D-glutamyl-meso-2,6-diaminopimeloyl-D-alanyl-D-alanine + UDP + H(+). The protein operates within cell wall biogenesis; peptidoglycan biosynthesis. Its function is as follows. Cell wall formation. Catalyzes the transfer of a GlcNAc subunit on undecaprenyl-pyrophosphoryl-MurNAc-pentapeptide (lipid intermediate I) to form undecaprenyl-pyrophosphoryl-MurNAc-(pentapeptide)GlcNAc (lipid intermediate II). In Corynebacterium glutamicum (strain R), this protein is UDP-N-acetylglucosamine--N-acetylmuramyl-(pentapeptide) pyrophosphoryl-undecaprenol N-acetylglucosamine transferase.